Reading from the N-terminus, the 373-residue chain is Ubiquitin domain-containing protein DSK2 (373 aa).

Residues 1–76 (MSLNIHIKSG…SVHLVKSQPK (76 aa)) form the Ubiquitin-like domain. Residues K13 and K76 each participate in a glycyl lysine isopeptide (Lys-Gly) (interchain with G-Cter in ubiquitin) cross-link. A disordered region spans residues 221 to 270 (DPNAGMGSAGGAASAFPAPGGDAPEEGSNTNTTSSSNTGNNAGTNAGTNA). The span at 231 to 270 (GAASAFPAPGGDAPEEGSNTNTTSSSNTGNNAGTNAGTNA) shows a compositional bias: low complexity. A UBA domain is found at 327–371 (PPEERYEHQLRQLNDMGFFDFDRNVAALRRSGGSVQGALDSLLNG).

The protein localises to the nucleus. In terms of biological role, involved, with RAD23 in spindle pole body duplication. Involved in the ubiquitin-proteasome proteolytic pathway. The chain is Ubiquitin domain-containing protein DSK2 (DSK2) from Saccharomyces cerevisiae (strain ATCC 204508 / S288c) (Baker's yeast).